A 352-amino-acid polypeptide reads, in one-letter code: Protein RecA (352 aa).

67–74 (GPESSGKT) lines the ATP pocket. A disordered region spans residues 333–352 (DSTPDFAVDGNDAEETEQDF). The segment covering 343–352 (NDAEETEQDF) has biased composition (acidic residues).

It belongs to the RecA family.

It localises to the cytoplasm. Its function is as follows. Can catalyze the hydrolysis of ATP in the presence of single-stranded DNA, the ATP-dependent uptake of single-stranded DNA by duplex DNA, and the ATP-dependent hybridization of homologous single-stranded DNAs. It interacts with LexA causing its activation and leading to its autocatalytic cleavage. In Klebsiella pneumoniae (strain 342), this protein is Protein RecA.